A 155-amino-acid polypeptide reads, in one-letter code: 6,7-dimethyl-8-ribityllumazine synthase (155 aa).

Residues F24, 58–60 (AFE), and 82–84 (VII) contribute to the 5-amino-6-(D-ribitylamino)uracil site. Residue 87-88 (ST) participates in (2S)-2-hydroxy-3-oxobutyl phosphate binding. H90 acts as the Proton donor in catalysis. 5-amino-6-(D-ribitylamino)uracil is bound at residue F115. R129 is a (2S)-2-hydroxy-3-oxobutyl phosphate binding site.

Belongs to the DMRL synthase family.

It carries out the reaction (2S)-2-hydroxy-3-oxobutyl phosphate + 5-amino-6-(D-ribitylamino)uracil = 6,7-dimethyl-8-(1-D-ribityl)lumazine + phosphate + 2 H2O + H(+). It functions in the pathway cofactor biosynthesis; riboflavin biosynthesis; riboflavin from 2-hydroxy-3-oxobutyl phosphate and 5-amino-6-(D-ribitylamino)uracil: step 1/2. Catalyzes the formation of 6,7-dimethyl-8-ribityllumazine by condensation of 5-amino-6-(D-ribitylamino)uracil with 3,4-dihydroxy-2-butanone 4-phosphate. This is the penultimate step in the biosynthesis of riboflavin. This chain is 6,7-dimethyl-8-ribityllumazine synthase, found in Chlorobaculum tepidum (strain ATCC 49652 / DSM 12025 / NBRC 103806 / TLS) (Chlorobium tepidum).